We begin with the raw amino-acid sequence, 196 residues long: Transcription repressor OFP10 (196 aa).

The OVATE domain maps to 100–159 (MAKESINPFEDYKKSMNQMIEERYIETESELKELLRCFLDINPSPQHNLIVRAFVDVCSH).

As to expression, expressed in roots, cauline leaves, shoots, stems, flower buds and siliques.

Its subcellular location is the nucleus. Functionally, transcriptional repressor that may regulate multiple aspects of plant growth and development through the regulation of BEL1-LIKE (BLH) and KNOX TALE (KNAT) homeodomain transcription factors. This chain is Transcription repressor OFP10 (OFP10), found in Arabidopsis thaliana (Mouse-ear cress).